A 613-amino-acid chain; its full sequence is Nuclear receptor subfamily 1 group D member 1 (613 aa).

Over residues 1–48 (MTTLDSNNNTGGVITYIGSSGSSPNRTSPESLYSDSSNGSFQSLTQGC) the composition is skewed to polar residues. Residues 1–70 (MTTLDSNNNT…TQDPARSFGS (70 aa)) are required for phosphorylation by CSNK1E and cytoplasmic localization. The tract at residues 1–102 (MTTLDSNNNT…SSFYNGSPPG (102 aa)) is disordered. The interval 1 to 129 (MTTLDSNNNT…TSNITKLNGM (129 aa)) is modulating. Residues 49 to 285 (PTYFPPSPTG…PPRSPSPEPT (237 aa)) form a crucial for activation of GJA1 region. Phosphoserine; by GSK3-beta is present on residues S55 and S59. The span at 69-102 (GSIPPSLGDDGSPSSSSSSSSSSSSSFYNGSPPG) shows a compositional bias: low complexity. The segment at residues 130–206 (VLLCKVCGDV…VGMSRDAVRF (77 aa)) is a DNA-binding region (nuclear receptor). NR C4-type zinc fingers lie at residues 133-153 (CKVCGDVASGFHYGVHACEGC) and 170-194 (CLKNENCSIVRINRNRCQQCRFKKC). N6-acetyllysine; by KAT5 is present on residues K192 and K193. Positions 233–286 (SSQCPLETPPTQHPTPGPMGPSPPPAPAPSPLVGFSQFPQQLTPPRSPSPEPTV) are disordered. The span at 239-262 (ETPPTQHPTPGPMGPSPPPAPAPS) shows a compositional bias: pro residues. At T275 the chain carries Phosphothreonine; by CDK1. The NR LBD domain occupies 285-613 (TVEDVISQVA…KLLSFRVDAQ (329 aa)). C417 lines the heme pocket. N6-acetyllysine is present on K590. H601 is a heme binding site.

The protein belongs to the nuclear hormone receptor family. NR1 subfamily. Binds DNA as a monomer or a homodimer. Interacts with C1D, SP1 and ZNHIT1. Interacts with OPHN1 (via C-terminus). Interacts with PER2; the interaction associates PER2 to BMAL1 promoter region. Interacts with CRY1. Interacts with CCAR2. Interacts with NR2E3. Interacts with SIAH2. Interacts with FBXW7 and CDK1. Interacts with HUWE1. Interacts with NR0B2. Interacts with NFIL3. Interacts (via domain NR LBD) with HSP90AA1 and HSP90AB1. In terms of processing, ubiquitinated, leading to its proteasomal degradation. Ubiquitinated by the SCF(FBXW7) complex when phosphorylated by CDK1 leading to its proteasomal degradation. Ubiquitinated by SIAH2; leading to its proteasomal degradation. Rapidly ubiquitinated in response to inflammatory triggers and sumoylation is a prerequisite to its ubiquitination. Post-translationally, sumoylated by UBE2I, desumoylated by SENP1, and sumoylation is a prerequisite to its ubiquitination. Phosphorylated by CSNK1E; phosphorylation enhances its cytoplasmic localization. In terms of processing, undergoes lysosome-mediated degradation in a time-dependent manner in the liver. In terms of tissue distribution, expressed in all tissues and cell lines examined. Expressed at high levels in some squamous carcinoma cell lines.

The protein resides in the nucleus. The protein localises to the cytoplasm. It localises to the cell projection. It is found in the dendrite. Its subcellular location is the dendritic spine. Functionally, transcriptional repressor which coordinates circadian rhythm and metabolic pathways in a heme-dependent manner. Integral component of the complex transcription machinery that governs circadian rhythmicity and forms a critical negative limb of the circadian clock by directly repressing the expression of core clock components BMAL1, CLOCK and CRY1. Also regulates genes involved in metabolic functions, including lipid and bile acid metabolism, adipogenesis, gluconeogenesis and the macrophage inflammatory response. Acts as a receptor for heme which stimulates its interaction with the NCOR1/HDAC3 corepressor complex, enhancing transcriptional repression. Recognizes two classes of DNA response elements within the promoter of its target genes and can bind to DNA as either monomers or homodimers, depending on the nature of the response element. Binds as a monomer to a response element composed of the consensus half-site motif 5'-[A/G]GGTCA-3' preceded by an A/T-rich 5' sequence (RevRE), or as a homodimer to a direct repeat of the core motif spaced by two nucleotides (RevDR-2). Acts as a potent competitive repressor of ROR alpha (RORA) function and regulates the levels of its ligand heme by repressing the expression of PPARGC1A, a potent inducer of heme synthesis. Regulates lipid metabolism by repressing the expression of APOC3 and by influencing the activity of sterol response element binding proteins (SREBPs); represses INSIG2 which interferes with the proteolytic activation of SREBPs which in turn govern the rhythmic expression of enzymes with key functions in sterol and fatty acid synthesis. Regulates gluconeogenesis via repression of G6PC1 and PEPCK and adipocyte differentiation via repression of PPARG. Regulates glucagon release in pancreatic alpha-cells via the AMPK-NAMPT-SIRT1 pathway and the proliferation, glucose-induced insulin secretion and expression of key lipogenic genes in pancreatic-beta cells. Positively regulates bile acid synthesis by increasing hepatic expression of CYP7A1 via repression of NR0B2 and NFIL3 which are negative regulators of CYP7A1. Modulates skeletal muscle oxidative capacity by regulating mitochondrial biogenesis and autophagy; controls mitochondrial biogenesis and respiration by interfering with the STK11-PRKAA1/2-SIRT1-PPARGC1A signaling pathway. Represses the expression of SERPINE1/PAI1, an important modulator of cardiovascular disease and the expression of inflammatory cytokines and chemokines in macrophages. Represses gene expression at a distance in macrophages by inhibiting the transcription of enhancer-derived RNAs (eRNAs). Plays a role in the circadian regulation of body temperature and negatively regulates thermogenic transcriptional programs in brown adipose tissue (BAT); imposes a circadian oscillation in BAT activity, increasing body temperature when awake and depressing thermogenesis during sleep. In concert with NR2E3, regulates transcriptional networks critical for photoreceptor development and function. In addition to its activity as a repressor, can also act as a transcriptional activator. In the ovarian granulosa cells acts as a transcriptional activator of STAR which plays a role in steroid biosynthesis. In collaboration with SP1, activates GJA1 transcription in a heme-independent manner. Represses the transcription of CYP2B10, CYP4A10 and CYP4A14. Represses the transcription of CES2. Represses and regulates the circadian expression of TSHB in a NCOR1-dependent manner. Negatively regulates the protein stability of NR3C1 and influences the time-dependent subcellular distribution of NR3C1, thereby affecting its transcriptional regulatory activity. Plays a critical role in the circadian control of neutrophilic inflammation in the lung; under resting, non-stress conditions, acts as a rhythmic repressor to limit inflammatory activity whereas in the presence of inflammatory triggers undergoes ubiquitin-mediated degradation thereby relieving inhibition of the inflammatory response. Plays a key role in the circadian regulation of microglial activation and neuroinflammation; suppresses microglial activation through the NF-kappaB pathway in the central nervous system. Plays a role in the regulation of the diurnal rhythms of lipid and protein metabolism in the skeletal muscle via transcriptional repression of genes controlling lipid and amino acid metabolism in the muscle. This Bos taurus (Bovine) protein is Nuclear receptor subfamily 1 group D member 1 (NR1D1).